The chain runs to 161 residues: Protein UXT homolog (161 aa).

This sequence belongs to the UXT family.

The sequence is that of Protein UXT homolog from Dictyostelium discoideum (Social amoeba).